The primary structure comprises 513 residues: V-type proton ATPase subunit B, kidney isoform (513 aa).

Residue arginine 394 coordinates ATP. Residues 510–513 (DTAL) carry the PDZ-binding motif.

This sequence belongs to the ATPase alpha/beta chains family. In terms of assembly, V-ATPase is a heteromultimeric enzyme made up of two complexes: the ATP-hydrolytic V1 complex and the proton translocation V0 complex. The V1 complex consists of three catalytic AB heterodimers that form a heterohexamer, three peripheral stalks each consisting of EG heterodimers, one central rotor including subunits D and F, and the regulatory subunits C and H. The proton translocation complex V0 consists of the proton transport subunit a, a ring of proteolipid subunits c9c'', rotary subunit d, subunits e and f, and the accessory subunits ATP6AP1/Ac45 and ATP6AP2/PRR. Forms a complex with NHERF1 and SCL4A7. As to expression, kidney; localizes to early distal nephron, encompassing thick ascending limbs and distal convoluted tubules (at protein level). Expressed in the cochlea and endolymphatic sac.

The protein resides in the apical cell membrane. Its subcellular location is the basolateral cell membrane. Non-catalytic subunit of the V1 complex of vacuolar(H+)-ATPase (V-ATPase), a multisubunit enzyme composed of a peripheral complex (V1) that hydrolyzes ATP and a membrane integral complex (V0) that translocates protons. V-ATPase is responsible for acidifying and maintaining the pH of intracellular compartments and in some cell types, is targeted to the plasma membrane, where it is responsible for acidifying the extracellular environment. Essential for the proper assembly and activity of V-ATPase. In renal intercalated cells, mediates secretion of protons (H+) into the urine thereby ensuring correct urinary acidification. Required for optimal olfactory function by mediating the acidification of the nasal olfactory epithelium. This chain is V-type proton ATPase subunit B, kidney isoform (ATP6V1B1), found in Homo sapiens (Human).